A 459-amino-acid chain; its full sequence is Chaperone SurA (459 aa).

The N-terminal stretch at 1–23 is a signal peptide; it reads MNHRLVALSVASLALLAPLTVPA. PpiC domains lie at 197 to 301 and 312 to 411; these read VQQI…KVLE and VTQS…QLME.

It is found in the periplasm. It catalyses the reaction [protein]-peptidylproline (omega=180) = [protein]-peptidylproline (omega=0). Its function is as follows. Chaperone involved in the correct folding and assembly of outer membrane proteins. Recognizes specific patterns of aromatic residues and the orientation of their side chains, which are found more frequently in integral outer membrane proteins. May act in both early periplasmic and late outer membrane-associated steps of protein maturation. This is Chaperone SurA from Albidiferax ferrireducens (strain ATCC BAA-621 / DSM 15236 / T118) (Rhodoferax ferrireducens).